Reading from the N-terminus, the 304-residue chain is MIDNQKYVILSLELHLFFSRIMKEHALFLEAGFTNKNYNLAMEADHYKKQFEDLLSYTVSASNGIIRPDILYSEELVTTLTSVAEQKTEEFTGIEINKNITTRELNLQSGVNPQVGQDLVNYVAQLNSDAIRLLDGLINFKERVLDGVLSCTIFTSNYPLLLEHIIHEANLYRSYVVDLENKIDIESKNAKEIELFWDHIMMEHALFMRGLLDPSEGELINTSNDFAIKFNELIEKTNEMTDSNIKNITEETLNETVEFKDFKEAGASGIEQCKIKSIILPLLADHVLREANHYIRILESYKNM.

The protein localises to the spore coat. The protein resides in the spore. Its subcellular location is the perispore. Its function is as follows. Contributes to the formation of thick-exosporium spores. The protein is Spore coat protein CotB of Clostridioides difficile (strain 630) (Peptoclostridium difficile).